A 756-amino-acid chain; its full sequence is Ribonucleoside-diphosphate reductase subunit alpha (756 aa).

The 91-residue stretch at 5 to 95 (LMVTKRDGTQ…IFHLRKKAYG (91 aa)) folds into the ATP-cone domain. ATP-binding positions include Lys9, 15 to 21 (EQINLDK), Thr55, and Lys91. Thr209 is a binding site for GDP. Cys225 and Cys462 are oxidised to a cystine. DTTP-binding positions include 232-234 (DSL), Arg262, and Arg269. Asn437 is a GDP binding site. Asn437 acts as the Proton acceptor in catalysis. Cys439 functions as the Cysteine radical intermediate in the catalytic mechanism. Residues Glu441 and 623-625 (ETS) contribute to the GDP site. Residue Glu441 is the Proton acceptor of the active site.

Belongs to the ribonucleoside diphosphate reductase large chain family. In terms of assembly, tetramer of two alpha and two beta subunits.

It catalyses the reaction a 2'-deoxyribonucleoside 5'-diphosphate + [thioredoxin]-disulfide + H2O = a ribonucleoside 5'-diphosphate + [thioredoxin]-dithiol. Its activity is regulated as follows. Under complex allosteric control mediated by deoxynucleoside triphosphates and ATP binding to separate specificity and activation sites on the alpha subunit. The type of nucleotide bound at the specificity site determines substrate preference. It seems probable that ATP makes the enzyme reduce CDP and UDP, dGTP favors ADP reduction and dTTP favors GDP reduction. Stimulated by ATP and inhibited by dATP binding to the activity site. In terms of biological role, provides the precursors necessary for DNA synthesis. Catalyzes the biosynthesis of deoxyribonucleotides from the corresponding ribonucleotides. The sequence is that of Ribonucleoside-diphosphate reductase subunit alpha (nrdA) from Haemophilus influenzae (strain ATCC 51907 / DSM 11121 / KW20 / Rd).